The primary structure comprises 599 residues: MFS-type transporter ucsM (599 aa).

The segment covering 23–34 (AHHHGKEREAHR) has biased composition (basic and acidic residues). Residues 23–42 (AHHHGKEREAHRQSLSSVPG) form a disordered region. The next 8 membrane-spanning stretches (helical) occupy residues 147–167 (VALG…GAWL), 178–198 (ILIG…GAVP), 204–224 (GKGT…AGLF), 263–283 (IMLI…ATVY), 291–311 (WLAF…LWYL), 386–406 (IFLY…ILPS), 424–444 (FNPI…YPAL), and 454–474 (ISRI…SSLV). N-linked (GlcNAc...) asparagine glycosylation occurs at Asn-517. 2 helical membrane-spanning segments follow: residues 539-559 (LFLF…PAIV) and 563-583 (LVWV…IFWV).

Belongs to the major facilitator superfamily. Proton-dependent oligopeptide transporter (POT/PTR) (TC 2.A.17) family.

It is found in the membrane. In terms of biological role, MFS-type transporter; part of the gene cluster that mediates the biosynthesis of UCS1025A, a member of the pyrrolizidinone family that acts as a strong telomerase inhibitor and displays potent antibacterial and antitumor properties. These compounds share a hemiaminal-containing pyrrolizidinone core fused with a gamma-lactone, giving a furopyrrolizidine that is connected to a decalin fragment. This is MFS-type transporter ucsM from Acremonium sp.